The sequence spans 1024 residues: Multidrug resistance protein MdtC (1024 aa).

Helical transmembrane passes span 15 to 35 (WLLT…LPVA), 333 to 353 (EVEQ…FAFL), 360 to 380 (LIPA…MYLC), 387 to 407 (LSLM…IVVL), 431 to 451 (VGFT…PLLL), 463 to 483 (FAIT…TLTP), 528 to 548 (WGLL…ISIP), 853 to 873 (LWLI…LYES), 897 to 917 (LFNA…IGIV), 953 to 973 (PIIM…LGSG), and 984 to 1004 (ITIV…TPVV).

It belongs to the resistance-nodulation-cell division (RND) (TC 2.A.6) family. MdtC subfamily. Part of a tripartite efflux system composed of MdtA, MdtB and MdtC. MdtC forms a heteromultimer with MdtB.

The protein localises to the cell inner membrane. The sequence is that of Multidrug resistance protein MdtC from Erwinia tasmaniensis (strain DSM 17950 / CFBP 7177 / CIP 109463 / NCPPB 4357 / Et1/99).